The primary structure comprises 215 residues: Meiotic chromosome segregation protein P8B7.28c (215 aa).

The tract at residues 159–202 is disordered; the sequence is TINSEYADDVSDNTDEERTESKGQQESNSAEEYDDDDSDEDRME. Composition is skewed to acidic residues over residues 164 to 176 and 187 to 201; these read YADDVSDNTDEER and SAEEYDDDDSDEDRM.

The protein localises to the nucleus. It is found in the nucleolus. Required for meiotic chromosome segregation. This chain is Meiotic chromosome segregation protein P8B7.28c, found in Schizosaccharomyces pombe (strain 972 / ATCC 24843) (Fission yeast).